Consider the following 350-residue polypeptide: C-X-C chemokine receptor type 1 (350 aa).

Topologically, residues 1–39 (MSNITDPQMWDFDDLNFTGMPPADEDYSPCMLETETLNK) are extracellular. Residues Asn3 and Asn16 are each glycosylated (N-linked (GlcNAc...) asparagine). A helical transmembrane segment spans residues 40–66 (YVVIIAYALVFLLSLLGNSLVMLVILY). Over 67–75 (SRVGRSVTD) the chain is Cytoplasmic. A helical transmembrane segment spans residues 76–96 (VYLLNLALADLLFALTLPIWA). Topologically, residues 97-111 (ASKVNGWIFGTFLCK) are extracellular. A disulfide bridge links Cys110 with Cys187. The helical transmembrane segment at 112 to 133 (VVSLLKEVNFYSGILLLACISV) threads the bilayer. The Cytoplasmic segment spans residues 134–154 (DRYLAIVHATRTLTQKRHLVK). Residues 155–174 (FVCLGCWGLSMNLSLPFFLF) form a helical membrane-spanning segment. At 175-199 (RQAYHPNNSSPVCYEVLGNDTAKWR) the chain is on the extracellular side. A helical membrane pass occupies residues 200–220 (MVLRILPHTFGFIVPLFVMLF). Residues 221–242 (CYGFTLRTLFKAHMGQKHRAMR) are Cytoplasmic-facing. Residues 243–264 (VIFAVVLIFLLCWLPYNLVLLA) form a helical membrane-spanning segment. Residues 265 to 285 (DTLMRTQVIQESCERRNNIGR) are Extracellular-facing. A helical membrane pass occupies residues 286-308 (ALDATEILGFLHSCLNPIIYAFI). Residues 309 to 350 (GQNFRHGFLKILAMHGLVSKEFLARHRVTSYTSSSVNVSSNL) are Cytoplasmic-facing.

Belongs to the G-protein coupled receptor 1 family. As to quaternary structure, interacts with IL8. Interacts with GNAI2.

It is found in the cell membrane. Its function is as follows. Receptor to interleukin-8, which is a powerful neutrophils chemotactic factor. Binding of IL-8 to the receptor causes activation of neutrophils. This response is mediated via a G-protein that activates a phosphatidylinositol-calcium second messenger system. In Homo sapiens (Human), this protein is C-X-C chemokine receptor type 1 (CXCR1).